The primary structure comprises 54 residues: Ovomucoid (54 aa).

In terms of domain architecture, Kazal-like spans 4–54; that stretch reads VDCSGYPTHACTLELKPLCGSDNQTYSNKCGFCNAVAQSNGTLTLSHFGKC. Cystine bridges form between Cys6–Cys36, Cys14–Cys33, and Cys22–Cys54. Residue Asn43 is glycosylated (N-linked (GlcNAc...) asparagine).

It localises to the secreted. The protein is Ovomucoid of Leipoa ocellata (Malleefowl).